Reading from the N-terminus, the 195-residue chain is MTRTATIERNTSETRIRLTLNIDGRGETSIGSGVPFLDHMLNLFARHGLFDLSLEACGDTQIDFHHTVEDIGIVLGEAFKQALADKQGINRYGQVTVPMDETLASAVVDISGRPYLVYNVDLPKAKVGDFDVELAQEFFQAFANHCGINLHINLLYGDNLHHIIEACFKAVGRAMDMATRLDPRVEGVMSTKGVL.

This sequence belongs to the imidazoleglycerol-phosphate dehydratase family.

Its subcellular location is the cytoplasm. The catalysed reaction is D-erythro-1-(imidazol-4-yl)glycerol 3-phosphate = 3-(imidazol-4-yl)-2-oxopropyl phosphate + H2O. Its pathway is amino-acid biosynthesis; L-histidine biosynthesis; L-histidine from 5-phospho-alpha-D-ribose 1-diphosphate: step 6/9. In Pelobacter propionicus (strain DSM 2379 / NBRC 103807 / OttBd1), this protein is Imidazoleglycerol-phosphate dehydratase.